Reading from the N-terminus, the 558-residue chain is C4b-binding protein alpha chain (558 aa).

An N-terminal signal peptide occupies residues 1 to 13 (MSLTAALWVAVFG). Sushi domains lie at 14 to 74 (KCGP…ACVK), 75 to 136 (KSCR…ECVI), 137 to 201 (AKCG…TCER), 202 to 260 (IICP…VCEL), 261 to 326 (NSCT…GCKE), 327 to 388 (ICCP…SCHQ), 389 to 445 (SCDF…QCKA), and 446 to 503 (LCRK…RCEQ). 16 disulfide bridges follow: C15/C60, C45/C72, C77/C118, C104/C134, C139/C182, C168/C199, C204/C246, C232/C258, C263/C312, C296/C324, C329/C373, C363/C386, C390/C431, C417/C443, C447/C488, and C474/C501. An N-linked (GlcNAc...) asparagine glycan is attached at N31. 2 N-linked (GlcNAc...) asparagine glycosylation sites follow: N177 and N186. N-linked (GlcNAc...) asparagine glycans are attached at residues N469 and N491.

In terms of assembly, disulfide-linked complex of alpha and beta chains.

It is found in the secreted. Controls the classical pathway of complement activation. It binds as a cofactor to C3b/C4b inactivator (C3bINA), which then hydrolyzes the complement fragment C4b. It also accelerates the degradation of the C4bC2a complex (C3 convertase) by dissociating the complement fragment C2a. Alpha chain binds C4b. It also interacts with anticoagulant protein S and with serum amyloid P component. In Rattus norvegicus (Rat), this protein is C4b-binding protein alpha chain (C4bpa).